Reading from the N-terminus, the 120-residue chain is Large ribosomal subunit protein uL24 (120 aa).

The protein belongs to the universal ribosomal protein uL24 family. As to quaternary structure, part of the 50S ribosomal subunit.

One of two assembly initiator proteins, it binds directly to the 5'-end of the 23S rRNA, where it nucleates assembly of the 50S subunit. Its function is as follows. Located at the polypeptide exit tunnel on the outside of the subunit. The polypeptide is Large ribosomal subunit protein uL24 (Methanocaldococcus jannaschii (strain ATCC 43067 / DSM 2661 / JAL-1 / JCM 10045 / NBRC 100440) (Methanococcus jannaschii)).